Here is a 138-residue protein sequence, read N- to C-terminus: Basic phospholipase A2 homolog G6K49 (138 aa).

The first 16 residues, 1-16, serve as a signal peptide directing secretion; it reads MRTLWIMAVLLLGVEG. 7 cysteine pairs are disulfide-bonded: C42–C132, C44–C60, C59–C112, C65–C138, C66–C105, C73–C98, and C91–C103. Residues 122-133 form an important for membrane-damaging activities in eukaryotes and bacteria; heparin-binding region; the sequence is KKHRVTVKFLCK.

This sequence belongs to the phospholipase A2 family. Group II subfamily. K49 sub-subfamily. Homodimer; non-covalently linked. In terms of tissue distribution, expressed by the venom gland.

Its subcellular location is the secreted. Functionally, snake venom phospholipase A2 (PLA2) that lacks enzymatic activity. Displays myotoxic activities. A model of myotoxic mechanism has been proposed: an apo Lys49-PLA2 is activated by the entrance of a hydrophobic molecule (e.g. fatty acid) at the hydrophobic channel of the protein leading to a reorientation of a monomer. This reorientation causes a transition between 'inactive' to 'active' states, causing alignment of C-terminal and membrane-docking sites (MDoS) side-by-side and putting the membrane-disruption sites (MDiS) in the same plane, exposed to solvent and in a symmetric position for both monomers. The MDoS region stabilizes the toxin on membrane by the interaction of charged residues with phospholipid head groups. Subsequently, the MDiS region destabilizes the membrane with penetration of hydrophobic residues. This insertion causes a disorganization of the membrane, allowing an uncontrolled influx of ions (i.e. calcium and sodium), and eventually triggering irreversible intracellular alterations and cell death. The polypeptide is Basic phospholipase A2 homolog G6K49 (Calloselasma rhodostoma (Malayan pit viper)).